Consider the following 278-residue polypeptide: HTH-type transcriptional regulator HdfR (278 aa).

Residues 1-58 (MDTELLKTFLEVSRTRHFGRAAEALYLTQSAVSFRIRQLENQLGVNLFTRHRNNIRLT) enclose the HTH lysR-type domain. A DNA-binding region (H-T-H motif) is located at residues 18 to 37 (FGRAAEALYLTQSAVSFRIR).

Belongs to the LysR transcriptional regulatory family.

In terms of biological role, negatively regulates the transcription of the flagellar master operon flhDC by binding to the upstream region of the operon. The chain is HTH-type transcriptional regulator HdfR from Salmonella dublin (strain CT_02021853).